The primary structure comprises 409 residues: Failed axon connections homolog (409 aa).

Residues 68–88 form a helical membrane-spanning segment; the sequence is YLTGGALLAAAAYLLHELLVI. A disordered region spans residues 372 to 409; sequence DEGAENSFSRTPDTDFTGHSLFDSDVDMDDYTDHEQCK.

The protein belongs to the FAX family.

The protein localises to the membrane. May play a role in axonal development. This Homo sapiens (Human) protein is Failed axon connections homolog (FAXC).